The sequence spans 504 residues: Terminase, large subunit (504 aa).

Residues 1–204 are ATPase activity; sequence MTRGERVIAF…LSIWIDDAVK (204 aa). Residues 54–61 carry the Walker A motif motif; sequence IARKNGKT. The Walker B motif signature appears at 149 to 154; that stretch reads LAILDE. Positions 326 to 415 are nuclease activity; that stretch reads FPFFWTPQKT…LPLVEFGQGF (90 aa). D471 is a Mg(2+) binding site.

Belongs to the Hendrixvirinae large terminase family. Homopentamer; forms a ring-like structure through which genomic DNA is translocated into the capsid. Interacts with the terminase small subunit; the active complex is composed of a pentamer ring of terminase large subunits and a nonamer ring of terminase small subunits. Interacts with the portal protein; this interaction allows the packaging of viral DNA. Requires Mg(2+) as cofactor. Mn(2+) is required as a cofactor.

Its activity is regulated as follows. Inhibited by zinc. The terminase large subunit acts as an ATP driven molecular motor necessary for viral DNA translocation into empty capsids and as an endonuclease that cuts the viral genome from the concetamer to initiate and to end a packaging reaction. The terminase lies at a unique vertex of the procapsid and is composed of two subunits, a small terminase subunit involved in viral DNA recognition (packaging sequence), and a large terminase subunit possessing endonucleolytic and ATPase activities. Both terminase subunits heterooligomerize and are docked on the portal protein to form the packaging machine. Packaging initiates by TerS recognizing the packaging sequence in the viral DNA. The nuclease activity of TerL cuts the viral DNA and the terminase-DNA complex binds to the portal of a procapsid shell. DNA is translocated into the capsid, powered by the packaging ATPase in TerL, which continues until the next site is encountered at which point the motor stops and again cuts the DNA to release the nucleocapsid filled with a unit-length genome ('unit length' packaging). This chain is Terminase, large subunit (2), found in Escherichia coli (Bacteriophage HK97).